The sequence spans 185 residues: Small ribosomal subunit protein bS6 (185 aa).

Positions 115–141 (AAQKAAAEKAEAARLEAEKAAEEEAAK) are enriched in basic and acidic residues. The tract at residues 115–185 (AAQKAAAEKA…EEPKSDEEDA (71 aa)) is disordered. The span at 142 to 169 (AAEAQAKEAPAAEAPAEEAPAAEAPAEA) shows a compositional bias: low complexity. Residues 170–185 (PAEEPAEEPKSDEEDA) show a composition bias toward acidic residues.

Belongs to the bacterial ribosomal protein bS6 family.

Binds together with bS18 to 16S ribosomal RNA. In Desulfatibacillum aliphaticivorans, this protein is Small ribosomal subunit protein bS6.